The sequence spans 59 residues: Large ribosomal subunit protein bL33 (59 aa).

This sequence belongs to the bacterial ribosomal protein bL33 family.

The chain is Large ribosomal subunit protein bL33 from Prosthecochloris aestuarii (strain DSM 271 / SK 413).